A 461-amino-acid chain; its full sequence is D-phenylhydantoinase (461 aa).

Residues histidine 59, histidine 61, and lysine 151 each contribute to the a divalent metal cation site. Lysine 151 carries the post-translational modification N6-carboxylysine. Tyrosine 156 is a binding site for substrate. A divalent metal cation is bound by residues histidine 182 and histidine 239. Position 286 (serine 286) interacts with substrate. Residue aspartate 313 coordinates a divalent metal cation. Substrate is bound at residue asparagine 335.

It belongs to the metallo-dependent hydrolases superfamily. Hydantoinase/dihydropyrimidinase family. In terms of assembly, homotetramer. A divalent metal cation serves as cofactor. In terms of processing, carboxylation allows a single lysine to coordinate two divalent metal cations.

It carries out the reaction D-5-phenylhydantoin + H2O = N-carbamoyl-D-phenylglycine + H(+). Functionally, catalyzes the stereospecific hydrolysis of the cyclic amide bond of D-hydantoin derivatives with an aromatic side chains at the 5'-position. Has no activity on dihydropyrimidines. The physiological function is unknown. The sequence is that of D-phenylhydantoinase from Escherichia coli O81 (strain ED1a).